A 436-amino-acid polypeptide reads, in one-letter code: Phosphoribosylamine--glycine ligase (436 aa).

Positions arginine 106–aspartate 318 constitute an ATP-grasp domain. Residue methionine 133–threonine 196 coordinates ATP. Positions 276, 288, and 290 each coordinate Mg(2+). The Mn(2+) site is built by glutamine 276, glutamate 288, and asparagine 290.

It belongs to the GARS family. Mg(2+) is required as a cofactor. The cofactor is Mn(2+).

The enzyme catalyses 5-phospho-beta-D-ribosylamine + glycine + ATP = N(1)-(5-phospho-beta-D-ribosyl)glycinamide + ADP + phosphate + H(+). It functions in the pathway purine metabolism; IMP biosynthesis via de novo pathway; N(1)-(5-phospho-D-ribosyl)glycinamide from 5-phospho-alpha-D-ribose 1-diphosphate: step 2/2. This Methanothermobacter thermautotrophicus (strain ATCC 29096 / DSM 1053 / JCM 10044 / NBRC 100330 / Delta H) (Methanobacterium thermoautotrophicum) protein is Phosphoribosylamine--glycine ligase.